The sequence spans 226 residues: Regulator of microtubule dynamics protein 1 (226 aa).

It belongs to the FAM82/RMD family. Interacts with air-2.

The protein localises to the cytoplasm. Its subcellular location is the cytoskeleton. The protein resides in the spindle pole. Acts in chromosome segregation and organization during mitosis. The sequence is that of Regulator of microtubule dynamics protein 1 (rmd-1) from Caenorhabditis elegans.